The chain runs to 562 residues: Adenylate kinase isoenzyme 5 (562 aa).

2 adenylate kinase regions span residues 133 to 316 (KIIL…VAVD) and 377 to 559 (KIIF…TAID). Position 142-147 (142-147 (GSGKGT)) interacts with ATP. Positions 162–193 (SVGELLRKKIHSASSNRKWSLIAKIITNGELA) are NMP 1. AMP-binding positions include R168, 191–193 (ELA), 219–222 (GFPR), and Q226. The LID 1 stretch occupies residues 256-266 (KRAEQQGRPDD). Residue R257 participates in ATP binding. AMP contacts are provided by R263 and R274. Residue 386–391 (GSGKGT) coordinates ATP. The tract at residues 406–435 (STGELLRQELTSESERSKLIRDIMERGDLV) is NMP 2. Residues T407, R412, 433–435 (DLV), 462–465 (GYPR), and Q469 each bind AMP. Residues 499 to 509 (QRSQSSQRGED) are LID 2. R500 is an ATP binding site. AMP contacts are provided by R506 and R517. G545 contacts ATP.

It belongs to the adenylate kinase family. Monomer. Interacts with YWHAZ. Brain specific.

It localises to the cytoplasm. It carries out the reaction AMP + ATP = 2 ADP. The catalysed reaction is a 2'-deoxyribonucleoside 5'-diphosphate + ATP = a 2'-deoxyribonucleoside 5'-triphosphate + ADP. It catalyses the reaction a ribonucleoside 5'-diphosphate + ATP = a ribonucleoside 5'-triphosphate + ADP. Its function is as follows. Nucleoside monophosphate (NMP) kinase that catalyzes the reversible transfer of the terminal phosphate group between nucleoside triphosphates and monophosphates. Active on AMP and dAMP with ATP as a donor. When GTP is used as phosphate donor, the enzyme phosphorylates AMP, CMP, and to a small extent dCMP. Also displays broad nucleoside diphosphate kinase activity. The chain is Adenylate kinase isoenzyme 5 (Ak5) from Mus musculus (Mouse).